A 253-amino-acid polypeptide reads, in one-letter code: Probable transcriptional regulatory protein AM1_1847 (253 aa).

This sequence belongs to the TACO1 family.

The protein resides in the cytoplasm. The protein is Probable transcriptional regulatory protein AM1_1847 of Acaryochloris marina (strain MBIC 11017).